A 388-amino-acid chain; its full sequence is Succinate--CoA ligase [ADP-forming] subunit beta (388 aa).

The region spanning 9–244 (KEILRQAGVP…LDEEDPAEVE (236 aa)) is the ATP-grasp domain. Residues Lys-46, 53 to 55 (GRG), Glu-99, Ala-102, and Glu-107 each bind ATP. The Mg(2+) site is built by Asn-199 and Asp-213. Residues Asn-264 and 321–323 (GIM) each bind substrate.

Belongs to the succinate/malate CoA ligase beta subunit family. As to quaternary structure, heterotetramer of two alpha and two beta subunits. Requires Mg(2+) as cofactor.

The enzyme catalyses succinate + ATP + CoA = succinyl-CoA + ADP + phosphate. It catalyses the reaction GTP + succinate + CoA = succinyl-CoA + GDP + phosphate. Its pathway is carbohydrate metabolism; tricarboxylic acid cycle; succinate from succinyl-CoA (ligase route): step 1/1. Succinyl-CoA synthetase functions in the citric acid cycle (TCA), coupling the hydrolysis of succinyl-CoA to the synthesis of either ATP or GTP and thus represents the only step of substrate-level phosphorylation in the TCA. The beta subunit provides nucleotide specificity of the enzyme and binds the substrate succinate, while the binding sites for coenzyme A and phosphate are found in the alpha subunit. In Albidiferax ferrireducens (strain ATCC BAA-621 / DSM 15236 / T118) (Rhodoferax ferrireducens), this protein is Succinate--CoA ligase [ADP-forming] subunit beta.